A 459-amino-acid chain; its full sequence is Elongation factor 1-alpha 4 (459 aa).

Positions 5–242 constitute a tr-type G domain; the sequence is KTHINIVVIG…DCIIPPQRPT (238 aa). Residues 14 to 21 are G1; the sequence is GHVDSGKS. The G2 stretch occupies residues 70 to 74; it reads GITID. Residues 91–94 are G3; the sequence is DAPG. The G4 stretch occupies residues 153–156; the sequence is NKMD. The segment at 194 to 196 is G5; that stretch reads SGF. A 5-glutamyl glycerylphosphorylethanolamine mark is found at Glu301 and Glu374.

This sequence belongs to the TRAFAC class translation factor GTPase superfamily. Classic translation factor GTPase family. EF-Tu/EF-1A subfamily.

The protein localises to the cytoplasm. Its function is as follows. This protein promotes the GTP-dependent binding of aminoacyl-tRNA to the A-site of ribosomes during protein biosynthesis. The chain is Elongation factor 1-alpha 4 (eft-4) from Oscheius tipulae.